Reading from the N-terminus, the 51-residue chain is Ribosome biogenesis protein Nop10 (51 aa).

Belongs to the NOP10 family.

Involved in ribosome biogenesis; more specifically in 18S rRNA pseudouridylation and in cleavage of pre-rRNA. The protein is Ribosome biogenesis protein Nop10 of Methanococcus maripaludis (strain C5 / ATCC BAA-1333).